A 454-amino-acid polypeptide reads, in one-letter code: Guanine deaminase (454 aa).

2 residues coordinate Zn(2+): histidine 82 and histidine 84. Residues 84-87 (HAPQ), 213-214 (RF), 240-243 (HISE), and aspartate 330 each bind substrate. Positions 240 and 330 each coordinate Zn(2+). Serine 453 bears the Phosphoserine mark.

Belongs to the metallo-dependent hydrolases superfamily. ATZ/TRZ family. In terms of assembly, homodimer. The cofactor is Zn(2+).

It carries out the reaction guanine + H2O + H(+) = xanthine + NH4(+). Its pathway is purine metabolism; guanine degradation; xanthine from guanine: step 1/1. Catalyzes the hydrolytic deamination of guanine, producing xanthine and ammonia. The chain is Guanine deaminase from Mus musculus (Mouse).